The primary structure comprises 200 residues: Ras-related protein RHN1 (200 aa).

GTP is bound by residues glycine 17–serine 25, leucine 36–threonine 42, aspartate 65–glutamine 69, asparagine 123–aspartate 126, and serine 153–lysine 155. An Effector region motif is present at residues glutamine 39–phenylalanine 47. Residues cysteine 198 and cysteine 199 are each lipidated (S-geranylgeranyl cysteine).

This sequence belongs to the small GTPase superfamily. Rab family. In terms of tissue distribution, high in stem, root, and inflorescence.

The protein localises to the cell membrane. Protein transport. Probably involved in vesicular traffic. This is Ras-related protein RHN1 (RHN1) from Nicotiana plumbaginifolia (Leadwort-leaved tobacco).